Here is a 358-residue protein sequence, read N- to C-terminus: Alanine racemase (358 aa).

Lysine 35 functions as the Proton acceptor; specific for D-alanine in the catalytic mechanism. N6-(pyridoxal phosphate)lysine is present on lysine 35. Arginine 130 serves as a coordination point for substrate. The active-site Proton acceptor; specific for L-alanine is the tyrosine 255. A substrate-binding site is contributed by methionine 303.

Belongs to the alanine racemase family. Pyridoxal 5'-phosphate is required as a cofactor.

The enzyme catalyses L-alanine = D-alanine. Its pathway is amino-acid biosynthesis; D-alanine biosynthesis; D-alanine from L-alanine: step 1/1. Functionally, catalyzes the interconversion of L-alanine and D-alanine. May also act on other amino acids. This chain is Alanine racemase (alr), found in Shewanella loihica (strain ATCC BAA-1088 / PV-4).